Consider the following 318-residue polypeptide: Acetyl-coenzyme A carboxylase carboxyl transferase subunit alpha (318 aa).

The region spanning 38 to 292 (KLEKRLAKLE…NKTITKSLHA (255 aa)) is the CoA carboxyltransferase C-terminal domain.

Belongs to the AccA family. In terms of assembly, acetyl-CoA carboxylase is a heterohexamer composed of biotin carboxyl carrier protein (AccB), biotin carboxylase (AccC) and two subunits each of ACCase subunit alpha (AccA) and ACCase subunit beta (AccD).

It localises to the cytoplasm. It carries out the reaction N(6)-carboxybiotinyl-L-lysyl-[protein] + acetyl-CoA = N(6)-biotinyl-L-lysyl-[protein] + malonyl-CoA. It functions in the pathway lipid metabolism; malonyl-CoA biosynthesis; malonyl-CoA from acetyl-CoA: step 1/1. Functionally, component of the acetyl coenzyme A carboxylase (ACC) complex. First, biotin carboxylase catalyzes the carboxylation of biotin on its carrier protein (BCCP) and then the CO(2) group is transferred by the carboxyltransferase to acetyl-CoA to form malonyl-CoA. The chain is Acetyl-coenzyme A carboxylase carboxyl transferase subunit alpha from Listeria monocytogenes serovar 1/2a (strain ATCC BAA-679 / EGD-e).